A 189-amino-acid polypeptide reads, in one-letter code: Putative zinc finger protein ORF189 (189 aa).

Residues 114–137 (YVCPYCVSRFPTVRALKIHLKRRH) form a C2H2-type zinc finger.

This chain is Putative zinc finger protein ORF189, found in Acidianus two-tailed virus (ATV).